The primary structure comprises 644 residues: Subversion of eukaryotic traffic protein A (644 aa).

Residues 1–400 (MYKIYSYLGW…FHTLLSQVSD (400 aa)) form a glucosyltransferase region. The tract at residues 401–644 (PVNPTAHELK…EYDNNHGLRI (244 aa)) is ptdIns(3)P-binding and localization domain.

In terms of processing, ubiquitinated and polyubiquitinated when ectopically produced in both yeast and mammalian cells; however it is unsure if this modification occurs during the L.pneumophila infection of host cells.

The protein resides in the secreted. Functionally, secreted effector that interferes with vesicular trafficking of host cells. Possesses glucohydrolase and mono-O-glucosyltransferase activity by using UDP-glucose as a sugar donor substrate. Is able to glucosylate histones H4 and H3.1 in vitro, but it is unlikely that histones are the natural substrates for SetA. May glycosylate a component of the host cell vesicle trafficking machinery during L.pneumophila infection. Binds with high specificity to phosphatidylinositol 3-phosphate (PtdIns(3)P), (with a dissociation constant value of 809 nM), which guides SetA to the cytosolic leaflet of the early phagosome of the host cell. This is Subversion of eukaryotic traffic protein A (setA) from Legionella pneumophila subsp. pneumophila (strain Philadelphia 1 / ATCC 33152 / DSM 7513).